Reading from the N-terminus, the 241-residue chain is Hybrid peroxiredoxin hyPrx5 (241 aa).

A Thioredoxin domain is found at 3-167 (SMEGKKVPQV…MLKYLAPQHQ (165 aa)). Cys49 functions as the Cysteine sulfenic acid (-SOH) intermediate; for peroxiredoxin activity in the catalytic mechanism. The 72-residue stretch at 170-241 (ESISIFTKPG…GSDDLEKYFA (72 aa)) folds into the Glutaredoxin domain. A disulfide bridge connects residues Cys180 and Cys183.

In the N-terminal section; belongs to the peroxiredoxin family. Prx5 subfamily. This sequence in the C-terminal section; belongs to the glutaredoxin family. In terms of assembly, homotetramer; interconnecting Prx and Grx domains of different monomers.

It carries out the reaction a hydroperoxide + 2 glutathione = an alcohol + glutathione disulfide + H2O. Functionally, thiol-specific peroxidase that catalyzes the reduction of hydrogen peroxide and organic hydroperoxides to water and alcohols, respectively. Plays a role in cell protection against oxidative stress by detoxifying peroxides. This chain is Hybrid peroxiredoxin hyPrx5 (PGdx), found in Haemophilus influenzae (strain ATCC 51907 / DSM 11121 / KW20 / Rd).